A 339-amino-acid polypeptide reads, in one-letter code: Quinolinate synthase (339 aa).

Positions 63 and 81 each coordinate iminosuccinate. Cys-126 is a [4Fe-4S] cluster binding site. Iminosuccinate is bound by residues 152–154 (YVN) and Ser-169. Cys-211 lines the [4Fe-4S] cluster pocket. Residues 237–239 (HPE) and Thr-254 contribute to the iminosuccinate site. Cys-297 contributes to the [4Fe-4S] cluster binding site.

This sequence belongs to the quinolinate synthase family. Type 2 subfamily. It depends on [4Fe-4S] cluster as a cofactor.

The protein resides in the cytoplasm. It catalyses the reaction iminosuccinate + dihydroxyacetone phosphate = quinolinate + phosphate + 2 H2O + H(+). It participates in cofactor biosynthesis; NAD(+) biosynthesis; quinolinate from iminoaspartate: step 1/1. In terms of biological role, catalyzes the condensation of iminoaspartate with dihydroxyacetone phosphate to form quinolinate. This Xylella fastidiosa (strain Temecula1 / ATCC 700964) protein is Quinolinate synthase.